Here is a 632-residue protein sequence, read N- to C-terminus: DNA mismatch repair protein MutL (632 aa).

The disordered stretch occupies residues 376 to 397 (EQPQAEPRQSFTPGSGAGSGYQ).

This sequence belongs to the DNA mismatch repair MutL/HexB family.

Its function is as follows. This protein is involved in the repair of mismatches in DNA. It is required for dam-dependent methyl-directed DNA mismatch repair. May act as a 'molecular matchmaker', a protein that promotes the formation of a stable complex between two or more DNA-binding proteins in an ATP-dependent manner without itself being part of a final effector complex. The protein is DNA mismatch repair protein MutL of Pseudomonas entomophila (strain L48).